The primary structure comprises 227 residues: Brain acid soluble protein 1 (227 aa).

Positions 1-11 (MGGKLSKKKKG) are enriched in basic residues. The disordered stretch occupies residues 1–227 (MGGKLSKKKK…NSDQTVTVKE (227 aa)). A lipid anchor (N-myristoyl glycine) is attached at G2. Residues 15–27 (NDEKAKEKDKKAE) are compositionally biased toward basic and acidic residues. K25 participates in a covalent cross-link: Glycyl lysine isopeptide (Lys-Gly) (interchain with G-Cter in SUMO2). 2 positions are modified to phosphothreonine: T31 and T36. A Phosphoserine modification is found at S40. Residues 49–105 (AEAKEGKEKPDQDAEGKAEEKEGEKDAAAAKEEAPKAEPEKTEGAAEAKAEPPKAPE) show a composition bias toward basic and acidic residues. Glycyl lysine isopeptide (Lys-Gly) (interchain with G-Cter in SUMO2) cross-links involve residues K84 and K97. Residues 106–139 (QEQAAPGPAAGGEAPKAAEAAAAPAESAAPAAGE) are compositionally biased toward low complexity. Over residues 140–152 (EPSKEEGEPKKTE) the composition is skewed to basic and acidic residues. K163 is covalently cross-linked (Glycyl lysine isopeptide (Lys-Gly) (interchain with G-Cter in SUMO2)). Phosphoserine occurs at positions 164, 170, 172, 176, and 195. The span at 173–185 (KPGSSEAAPSSKE) shows a compositional bias: polar residues. T196 carries the phosphothreonine modification. A phosphoserine mark is found at S205 and S219. Residues 218–227 (NSDQTVTVKE) are compositionally biased toward polar residues.

Brain.

Its subcellular location is the cell membrane. It is found in the cell projection. It localises to the growth cone. The protein is Brain acid soluble protein 1 (BASP1) of Homo sapiens (Human).